The following is a 301-amino-acid chain: Small ribosomal subunit protein uS3 (301 aa).

One can recognise a KH type-2 domain in the interval 39-107; it reads VREYLKAKLK…PVAVNIEEVR (69 aa). Residues 211–301 form a disordered region; that stretch reads GESPGAKLDA…AAAADGTKTE (91 aa). Residues 224–244 show a composition bias toward basic and acidic residues; that stretch reads DEERKPRGPRRDARPGSDRPA. Residues 245–257 show a composition bias toward low complexity; that stretch reads PRGARAPRAPAGG.

It belongs to the universal ribosomal protein uS3 family. As to quaternary structure, part of the 30S ribosomal subunit. Forms a tight complex with proteins S10 and S14.

In terms of biological role, binds the lower part of the 30S subunit head. Binds mRNA in the 70S ribosome, positioning it for translation. The chain is Small ribosomal subunit protein uS3 from Polaromonas sp. (strain JS666 / ATCC BAA-500).